A 112-amino-acid polypeptide reads, in one-letter code: Large ribosomal subunit protein eL30y (112 aa).

The protein belongs to the eukaryotic ribosomal protein eL30 family.

This chain is Large ribosomal subunit protein eL30y (RPL30B), found in Arabidopsis thaliana (Mouse-ear cress).